A 411-amino-acid polypeptide reads, in one-letter code: Glutamate dehydrogenase 1 (411 aa).

Lys-102 is a catalytic residue.

The protein belongs to the Glu/Leu/Phe/Val dehydrogenases family.

The catalysed reaction is L-glutamate + NAD(+) + H2O = 2-oxoglutarate + NH4(+) + NADH + H(+). It carries out the reaction L-glutamate + NADP(+) + H2O = 2-oxoglutarate + NH4(+) + NADPH + H(+). In Arabidopsis thaliana (Mouse-ear cress), this protein is Glutamate dehydrogenase 1 (GDH1).